The sequence spans 249 residues: Small ribosomal subunit protein eS6 (249 aa).

A compositionally biased stretch (basic residues) spans 223 to 238; the sequence is LRQRDHSKKHTQKVHA. Positions 223–249 are disordered; that stretch reads LRQRDHSKKHTQKVHAQRAEVAAFQKK.

It belongs to the eukaryotic ribosomal protein eS6 family. As to quaternary structure, component of the small ribosomal subunit. Part of the small subunit (SSU) processome, composed of more than 70 proteins and the RNA chaperone small nucleolar RNA (snoRNA) U3. Post-translationally, ribosomal protein S6 is the major substrate of protein kinases in eukaryote ribosomes.

It is found in the cytoplasm. Its subcellular location is the nucleus. The protein resides in the nucleolus. Component of the 40S small ribosomal subunit. Plays an important role in controlling cell growth and proliferation through the selective translation of particular classes of mRNA. Part of the small subunit (SSU) processome, first precursor of the small eukaryotic ribosomal subunit. During the assembly of the SSU processome in the nucleolus, many ribosome biogenesis factors, an RNA chaperone and ribosomal proteins associate with the nascent pre-rRNA and work in concert to generate RNA folding, modifications, rearrangements and cleavage as well as targeted degradation of pre-ribosomal RNA by the RNA exosome. The sequence is that of Small ribosomal subunit protein eS6 (RPS6) from Leishmania infantum.